We begin with the raw amino-acid sequence, 226 residues long: Transmembrane emp24 domain-containing protein 5 (226 aa).

The first 24 residues, 1-24 (MGDKTWLPFPVVLLAALLLPRAAG), serve as a signal peptide directing secretion. Residues 25–193 (FTPSLDSDFT…IQESNFDRVN (169 aa)) are Lumenal-facing. A GOLD domain is found at 42 to 123 (KECFYQPMPL…EKVIFFELIL (82 aa)). A helical transmembrane segment spans residues 194-214 (FWSMVNLVVMVVVSAIQVYML). Residues 215 to 226 (KSLFEDKRKSRT) are Cytoplasmic-facing. Residues 217–218 (LF) carry the Mediates export from ER motif.

This sequence belongs to the EMP24/GP25L family. As to quaternary structure, interacts with TMED9 and TMED10.

The protein resides in the endoplasmic reticulum membrane. It localises to the golgi apparatus. The protein localises to the cis-Golgi network membrane. Its subcellular location is the endoplasmic reticulum-Golgi intermediate compartment membrane. Functionally, potential role in vesicular protein trafficking, mainly in the early secretory pathway. Required for the maintenance of the Golgi apparatus; involved in protein exchange between Golgi stacks during assembly. Probably not required for COPI-vesicle-mediated retrograde transport. This is Transmembrane emp24 domain-containing protein 5 (TMED5) from Bos taurus (Bovine).